Consider the following 105-residue polypeptide: Heat shock protein HspQ (105 aa).

This sequence belongs to the HspQ family.

It localises to the cytoplasm. Functionally, involved in the degradation of certain denaturated proteins, including DnaA, during heat shock stress. The chain is Heat shock protein HspQ from Escherichia fergusonii (strain ATCC 35469 / DSM 13698 / CCUG 18766 / IAM 14443 / JCM 21226 / LMG 7866 / NBRC 102419 / NCTC 12128 / CDC 0568-73).